Here is a 198-residue protein sequence, read N- to C-terminus: Ribonuclease HII (198 aa).

The 188-residue stretch at 11–198 (NLIAGVDEVG…GPVKRVLGLV (188 aa)) folds into the RNase H type-2 domain. 3 residues coordinate a divalent metal cation: Asp17, Glu18, and Asp109.

Belongs to the RNase HII family. Mn(2+) serves as cofactor. Requires Mg(2+) as cofactor.

It localises to the cytoplasm. The catalysed reaction is Endonucleolytic cleavage to 5'-phosphomonoester.. Its function is as follows. Endonuclease that specifically degrades the RNA of RNA-DNA hybrids. The chain is Ribonuclease HII from Yersinia pseudotuberculosis serotype O:1b (strain IP 31758).